The chain runs to 659 residues: Cytochrome bo(3) ubiquinol oxidase subunit 1 (659 aa).

Residues 1–14 (MFGKLTLKAIPVDE) are Extracellular-facing. Residues 15–35 (PIIMVTYISIILIALFISFSI) traverse the membrane as a helical segment. At 36–58 (TYFKKWKYLWYEWFTTVDHKKIS) the chain is on the cytoplasmic side. Residues 59–79 (IMYGILAFIMLFRGFVDAILM) traverse the membrane as a helical segment. Positions 71, 75, and 98 each coordinate a ubiquinone. Residues 80 to 106 (RTQQVIASSGNTGFLPPHHYDQIFTAH) are Extracellular-facing. Residue His106 coordinates heme b. A helical transmembrane segment spans residues 107–127 (GVIMIFFVAMPLVIGLMNLVV). At 128-145 (PLQIGARDVAFPFLNNLS) the chain is on the cytoplasmic side. A helical transmembrane segment spans residues 146–166 (FWLNVSGAILLTLSLGIGEFA). The Extracellular portion of the chain corresponds to 167–189 (QTGWLAYPPLSEVKYSPGVGVDY). Trp170 is a heme b binding site. Residues 190-210 (WIWSLQISGVGTTLTGINFLI) traverse the membrane as a helical segment. Residues 211–225 (TILKMRAPGMCFFKM) are Cytoplasmic-facing. Residues 226–246 (PVFTWAALCTNILIVISFPVL) traverse the membrane as a helical segment. The Extracellular segment spans residues 247 to 277 (TTTLLLLTLDRCFDFHFFTNNFGGNPMMYVN). Residues 278 to 298 (LIWIWGHPEVYILVLPVFGVF) traverse the membrane as a helical segment. Residue His284 coordinates Cu(2+). Positions 284–288 (HPEVY) form a cross-link, 1'-histidyl-3'-tyrosine (His-Tyr). Residue Tyr288 participates in Fe(II)-heme o binding. Residues 299–309 (SEVVATFSKKR) are Cytoplasmic-facing. The helical transmembrane segment at 310–330 (LFGYVSLVWATLAITILSFIV) threads the bilayer. Over 331 to 347 (WLHHFFTMGAGSNVNAF) the chain is Extracellular. Cu(2+) is bound by residues His333 and His334. Residues 348-368 (FGITTMIIAIPTGVKIFNWLF) form a helical membrane-spanning segment. Residues 369 to 380 (TMYQGRVHMHSS) lie on the Cytoplasmic side of the membrane. Residues 381-401 (MLWTIGFLITFSIGGMTGVLL) form a helical membrane-spanning segment. Residues 402 to 413 (SIPPADFILHNS) are Extracellular-facing. Residues His411 and His419 each contribute to the Fe(II)-heme o site. The helical transmembrane segment at 414-434 (LFLVAHFHNVIIGGVVFGCFA) threads the bilayer. His421 provides a ligand contact to heme b. Residues 435–456 (GINYWFPKLFGFILNELWGKRA) lie on the Cytoplasmic side of the membrane. The helical transmembrane segment at 457 to 477 (FWFWIIGFFTAFMPLYFLGFM) threads the bilayer. Over 478–490 (GMTRRLSQNIDIE) the chain is Extracellular. Arg481 and Arg482 together coordinate heme b. The helical transmembrane segment at 491–511 (FHFLLSIAAIGAILIGIGILC) threads the bilayer. At 512-580 (QIIQFWVSVR…KNQVQKKQYS (69 aa)) the chain is on the cytoplasmic side. A helical transmembrane segment spans residues 581–601 (AIHMPKNTGLGIFISFFSLLF). The Extracellular portion of the chain corresponds to 602–605 (GFSA). Residues 606–626 (VWNIIWLSFLSFLVVIISLIF) traverse the membrane as a helical segment. Residues 627–659 (KSIDENTEYTVSVKEIESIENRHLENVQKAGLK) lie on the Cytoplasmic side of the membrane.

Belongs to the heme-copper respiratory oxidase family. The cytochrome bo(3) ubiquinol oxidase complex is a heterooctamer of two A chains, two B chains, two C chains and two D chains. Cu(2+) is required as a cofactor. It depends on heme b as a cofactor. Fe(II)-heme o serves as cofactor.

It localises to the cell membrane. It catalyses the reaction 2 a ubiquinol + O2 + n H(+)(in) = 2 a ubiquinone + 2 H2O + n H(+)(out). In terms of biological role, cytochrome bo(3) ubiquinol oxidase is the terminal enzyme in the aerobic respiratory chain. Catalyzes the four-electron reduction of O2 to water, using a ubiquinol as a membrane soluble electron donor for molecular oxygen reduction. Has proton pump activity across the membrane in addition to electron transfer, pumping 2 protons/electron and generating a proton motive force. All the redox centers of this enzyme complex are located within the largest subunit, subunit I. Protons are probably pumped via D- and K- channels found in this subunit. In Buchnera aphidicola subsp. Schizaphis graminum (strain Sg), this protein is Cytochrome bo(3) ubiquinol oxidase subunit 1 (cyoB).